Reading from the N-terminus, the 149-residue chain is Ribosome-binding factor A (149 aa).

Positions 125 to 149 (FGSADEVLNEDEGATDDTDDTKGKD) are disordered. Acidic residues predominate over residues 131 to 143 (VLNEDEGATDDTD).

The protein belongs to the RbfA family. In terms of assembly, monomer. Binds 30S ribosomal subunits, but not 50S ribosomal subunits or 70S ribosomes.

It localises to the cytoplasm. In terms of biological role, one of several proteins that assist in the late maturation steps of the functional core of the 30S ribosomal subunit. Associates with free 30S ribosomal subunits (but not with 30S subunits that are part of 70S ribosomes or polysomes). Required for efficient processing of 16S rRNA. May interact with the 5'-terminal helix region of 16S rRNA. This Shewanella sp. (strain W3-18-1) protein is Ribosome-binding factor A.